Here is a 612-residue protein sequence, read N- to C-terminus: Probable Xaa-Pro aminopeptidase P (612 aa).

The Mn(2+) site is built by Asp-409, Asp-420, Glu-518, and Glu-532.

It belongs to the peptidase M24B family. Requires Mn(2+) as cofactor.

It catalyses the reaction Release of any N-terminal amino acid, including proline, that is linked to proline, even from a dipeptide or tripeptide.. Its function is as follows. Catalyzes the removal of a penultimate prolyl residue from the N-termini of peptides. This chain is Probable Xaa-Pro aminopeptidase P (AMPP), found in Verticillium alfalfae (strain VaMs.102 / ATCC MYA-4576 / FGSC 10136) (Verticillium wilt of alfalfa).